The sequence spans 387 residues: Chorismate synthase (387 aa).

R40 and R46 together coordinate NADP(+). FMN contacts are provided by residues R129 to S131, Q250 to A251, G295, K310 to T314, and R336.

The protein belongs to the chorismate synthase family. As to quaternary structure, homotetramer. FMNH2 serves as cofactor.

The enzyme catalyses 5-O-(1-carboxyvinyl)-3-phosphoshikimate = chorismate + phosphate. Its pathway is metabolic intermediate biosynthesis; chorismate biosynthesis; chorismate from D-erythrose 4-phosphate and phosphoenolpyruvate: step 7/7. Its function is as follows. Catalyzes the anti-1,4-elimination of the C-3 phosphate and the C-6 proR hydrogen from 5-enolpyruvylshikimate-3-phosphate (EPSP) to yield chorismate, which is the branch point compound that serves as the starting substrate for the three terminal pathways of aromatic amino acid biosynthesis. This reaction introduces a second double bond into the aromatic ring system. The protein is Chorismate synthase of Desulforamulus reducens (strain ATCC BAA-1160 / DSM 100696 / MI-1) (Desulfotomaculum reducens).